The primary structure comprises 26 residues: Glycyl-poneratoxin (26 aa).

Residue arginine 25 is modified to Arginine amide; in delta-paraponeritoxin-Pc1a.

Post-translationally, the glycine-PoTx is a non-amidated form of poneratoxin, with an extra-Gly at C-terminus. This loss of amidation does not alter toxin activity on Nav1.7/SCN9A. Expressed by the venom gland.

It localises to the secreted. Toxin that causes pain in vertebrates by targeting tetrodotoxin (TTX)-sensitive sodium channels in peripheral sensory neurons. Also blocks synaptic transmission and stimulates smooth muscle contraction. Converts the normally rapidly activating and inactivating sodium channel current into one that does not inactivate. Is active on both Nav1.6/SCN8A and Nav1.7/SCN9A sodium channels, with a much potent activity on Nav1.6/SCN8A (EC(50)=97 nM on human channels) than on Nav1.7/SCN9A (EC(50)=2.3 uM on human and EC(50)=1.8 uM on mouse channels). On these channels, causes a sustained current, a reduction in peak current amplitude and a hyperpolarising shift. Modulates Nav1.7/SCN9A in a non-competitive manner with TTX or tetracaine. Toxin-induced persistant current is very slowly reversible with repeated wash steps over 30 minutes. In vivo, shallow intraplantar injection in mice causes immediate, long-lasting and near-maximal nocifensive behaviors, which decrease with coinjection of TTX. When tested on insects, causes paralysis but not mortality at high doses. The sequence is that of Glycyl-poneratoxin from Paraponera clavata (Bullet ant).